The chain runs to 146 residues: Keratin-associated protein 4-1 (146 aa).

Tandem repeats lie at residues 5–9 (CCGSV), 24–28 (CCRPS), 29–33 (CCQTT), 34–38 (CCCPS), 44–48 (CCRPS), 54–58 (CCQTT), 59–63 (CCRPS), 64–68 (CCHPV), 69–73 (CCQTT), 83–87 (CCRPL), 88–92 (CCQTT), 102–106 (CCRPL), 107–111 (CCQTT), 121–125 (CCRPL), 126–130 (CCQTT), 131–135 (CCRAT), 136–140 (CCRPS), and 141–145 (CCGSS). The segment at 5 to 145 (CCGSVCSDQG…CCRPSCCGSS (141 aa)) is 18 X 5 AA repeats of C-C-[GRQC]-[SPT]-[VSTL].

The protein belongs to the KRTAP type 4 family. In terms of assembly, interacts with hair keratins. In terms of tissue distribution, expressed in the hair follicles.

Functionally, in the hair cortex, hair keratin intermediate filaments are embedded in an interfilamentous matrix, consisting of hair keratin-associated proteins (KRTAP), which are essential for the formation of a rigid and resistant hair shaft through their extensive disulfide bond cross-linking with abundant cysteine residues of hair keratins. The matrix proteins include the high-sulfur and high-glycine-tyrosine keratins. The protein is Keratin-associated protein 4-1 (KRTAP4-1) of Homo sapiens (Human).